A 57-amino-acid polypeptide reads, in one-letter code: Small ribosomal subunit protein bS21 (57 aa).

Residues 32-42 (VRRREHYEKPS) show a composition bias toward basic and acidic residues. The tract at residues 32 to 57 (VRRREHYEKPSQRRKRKLEASRRRRR) is disordered. A compositionally biased stretch (basic residues) spans 43–57 (QRRKRKLEASRRRRR).

It belongs to the bacterial ribosomal protein bS21 family.

The polypeptide is Small ribosomal subunit protein bS21 (Synechococcus elongatus (strain ATCC 33912 / PCC 7942 / FACHB-805) (Anacystis nidulans R2)).